The sequence spans 276 residues: Halorhodopsin (276 aa).

A propeptide spanning residues 1 to 21 (MTAASTTATTMLQATQSDVLQ) is cleaved from the precursor. Residues 22–25 (EIQS) are Extracellular-facing. Residues 26 to 51 (NFLLNSSIWVNIALAGVVILLFVAMG) form a helical membrane-spanning segment. Topologically, residues 52-57 (RDIESP) are cytoplasmic. A helical membrane pass occupies residues 58 to 81 (RAKLIWVATMLVPLVSISSYAGLA). Residues 82-105 (SGLTVGFLQMPPGHALAGQEVLSP) lie on the Extracellular side of the membrane. The chain crosses the membrane as a helical span at residues 106-127 (WGRYLTWTFSTPMILLALGLLA). The Cytoplasmic portion of the chain corresponds to 128–130 (DTD). The chain crosses the membrane as a helical span at residues 131–154 (IASLFTAITMDIGMCVTGLAAALI). At 155 to 157 (TSS) the chain is on the extracellular side. The helical transmembrane segment at 158–180 (HLLRWVFYGISCAFFVAVLYVLL) threads the bilayer. Topologically, residues 181 to 192 (VQWPADAEAAGT) are cytoplasmic. The chain crosses the membrane as a helical span at residues 193–216 (SEIFGTLKILTVVLWLGYPILWAL). Topologically, residues 217–225 (GSEGVALLS) are extracellular. The helical transmembrane segment at 226-254 (VGVTSWGYSGLDILAKYVFAFLLLRWVAA) threads the bilayer. Lys241 bears the N6-(retinylidene)lysine mark. At 255–276 (NEGAVSGSGMSIGSGGAAPADD) the chain is on the cytoplasmic side.

It belongs to the archaeal/bacterial/fungal opsin family.

It is found in the cell membrane. Its function is as follows. Light-driven chloride pump. The chain is Halorhodopsin (hop) from Halobacterium halobium (strain port).